The primary structure comprises 106 residues: Replication restart protein PriB (106 aa).

An SSB domain is found at 4 to 103; the sequence is TNRLVLSGTV…LHAEQIEFID (100 aa).

It belongs to the PriB family. In terms of assembly, homodimer. Interacts with PriA and DnaT. Component of the replication restart primosome. Primosome assembly occurs via a 'hand-off' mechanism. PriA binds to replication forks, subsequently PriB then DnaT bind; DnaT then displaces ssDNA to generate the helicase loading substrate.

Functionally, involved in the restart of stalled replication forks, which reloads the replicative helicase on sites other than the origin of replication; the PriA-PriB pathway is the major replication restart pathway. During primosome assembly it facilitates complex formation between PriA and DnaT on DNA; stabilizes PriA on DNA. Stimulates the DNA unwinding activity of PriA helicase. The chain is Replication restart protein PriB from Yersinia pestis.